Reading from the N-terminus, the 59-residue chain is Protein HOR7 (59 aa).

An N-terminal signal peptide occupies residues M1–A19.

To yeast DDR2.

The sequence is that of Protein HOR7 (HOR7) from Saccharomyces cerevisiae (strain ATCC 204508 / S288c) (Baker's yeast).